The primary structure comprises 199 residues: 7-methyl-GTP pyrophosphatase (199 aa).

Catalysis depends on Asp-76, which acts as the Proton acceptor.

The protein belongs to the Maf family. YceF subfamily. Requires a divalent metal cation as cofactor.

It is found in the cytoplasm. It carries out the reaction N(7)-methyl-GTP + H2O = N(7)-methyl-GMP + diphosphate + H(+). In terms of biological role, nucleoside triphosphate pyrophosphatase that hydrolyzes 7-methyl-GTP (m(7)GTP). May have a dual role in cell division arrest and in preventing the incorporation of modified nucleotides into cellular nucleic acids. The polypeptide is 7-methyl-GTP pyrophosphatase (Rhizobium etli (strain ATCC 51251 / DSM 11541 / JCM 21823 / NBRC 15573 / CFN 42)).